A 773-amino-acid chain; its full sequence is Carnitine O-palmitoyltransferase 1, liver isoform (773 aa).

Ala-2 bears the N-acetylalanine mark. Topologically, residues 2–47 are cytoplasmic; that stretch reads AEAHQAVAFQFTVTPDGIDLRLSHEALKQICLSGLHSWKKKFIRFK. The helical transmembrane segment at 48–73 threads the bilayer; it reads NGIITGVFPANPSSWLIVVVGVISSM. Over 74–102 the chain is Mitochondrial intermembrane; that stretch reads HAKVDPSLGMIAKISRTLDTTGRMSSQTK. A helical membrane pass occupies residues 103–122; that stretch reads NIVSGVLFGTGLWVAVIMTM. The Cytoplasmic portion of the chain corresponds to 123–773; the sequence is RYSLKVLLSY…LFGLTINSKK (651 aa). Tyr-282 is modified (3'-nitrotyrosine). Residue His-473 is the Proton acceptor of the active site. Position 555-567 (555-567) interacts with CoA; the sequence is GKGLIKKCRTSPD. Thr-588 carries the phosphothreonine modification. Tyr-589 carries the 3'-nitrotyrosine modification. Positions 589 and 602 each coordinate (R)-carnitine. A Phosphothreonine modification is found at Thr-604. A phosphoserine mark is found at Ser-741 and Ser-747.

Belongs to the carnitine/choline acetyltransferase family. In terms of assembly, homohexamer and homotrimer. Identified in a complex that contains at least CPT1A, ACSL1 and VDAC1. Also identified in complexes with ACSL1 and VDAC2 and VDAC3. Interacts with ZDHHC4. Liver and kidney.

It is found in the mitochondrion outer membrane. The catalysed reaction is (R)-carnitine + hexadecanoyl-CoA = O-hexadecanoyl-(R)-carnitine + CoA. It carries out the reaction succinyl-CoA + L-lysyl-[protein] = N(6)-succinyl-L-lysyl-[protein] + CoA + H(+). The protein operates within lipid metabolism; fatty acid beta-oxidation. Inhibited by malonyl-CoA. In terms of biological role, catalyzes the transfer of the acyl group of long-chain fatty acid-CoA conjugates onto carnitine, an essential step for the mitochondrial uptake of long-chain fatty acids and their subsequent beta-oxidation in the mitochondrion. Also possesses a lysine succinyltransferase activity that can regulate enzymatic activity of substrate proteins such as ENO1 and metabolism independent of its classical carnitine O-palmitoyltransferase activity. Plays an important role in hepatic triglyceride metabolism. Also plays a role in inducible regulatory T-cell (iTreg) differentiation once activated by butyryl-CoA that antagonizes malonyl-CoA-mediated CPT1A repression. Sustains the IFN-I response by recruiting ZDHCC4 to palmitoylate MAVS at the mitochondria leading to MAVS stabilization and activation. The chain is Carnitine O-palmitoyltransferase 1, liver isoform (Cpt1a) from Rattus norvegicus (Rat).